The sequence spans 368 residues: Homoserine O-acetyltransferase (368 aa).

An AB hydrolase-1 domain is found at 47-349 (NAILICHALS…SGEGHDSFLL (303 aa)). Residue Ser-153 is the Nucleophile of the active site. Arg-221 serves as a coordination point for substrate. Residues Asp-311 and His-344 contribute to the active site. Substrate is bound at residue Asp-345.

The protein belongs to the AB hydrolase superfamily. MetX family. Homodimer.

The protein resides in the cytoplasm. It catalyses the reaction L-homoserine + acetyl-CoA = O-acetyl-L-homoserine + CoA. It functions in the pathway amino-acid biosynthesis; L-methionine biosynthesis via de novo pathway; O-acetyl-L-homoserine from L-homoserine: step 1/1. Transfers an acetyl group from acetyl-CoA to L-homoserine, forming acetyl-L-homoserine. This Leptospira borgpetersenii serovar Hardjo-bovis (strain JB197) protein is Homoserine O-acetyltransferase.